Here is an 85-residue protein sequence, read N- to C-terminus: RNA-binding protein Hfq (85 aa).

One can recognise a Sm domain in the interval 9–68 (DPFLNELRKEKVPVSVFLVNGIKLHGIIDSFDQYVVMLKNSITQMVYKHAISTVVPSRMV).

It belongs to the Hfq family. As to quaternary structure, homohexamer.

RNA chaperone that binds small regulatory RNA (sRNAs) and mRNAs to facilitate mRNA translational regulation in response to envelope stress, environmental stress and changes in metabolite concentrations. Also binds with high specificity to tRNAs. This is RNA-binding protein Hfq from Legionella pneumophila (strain Paris).